We begin with the raw amino-acid sequence, 111 residues long: Phosphoribosyl-ATP pyrophosphatase (111 aa).

It belongs to the PRA-PH family.

The protein localises to the cytoplasm. It carries out the reaction 1-(5-phospho-beta-D-ribosyl)-ATP + H2O = 1-(5-phospho-beta-D-ribosyl)-5'-AMP + diphosphate + H(+). It functions in the pathway amino-acid biosynthesis; L-histidine biosynthesis; L-histidine from 5-phospho-alpha-D-ribose 1-diphosphate: step 2/9. The sequence is that of Phosphoribosyl-ATP pyrophosphatase from Pseudomonas paraeruginosa (strain DSM 24068 / PA7) (Pseudomonas aeruginosa (strain PA7)).